A 555-amino-acid chain; its full sequence is CTP synthase (555 aa).

The interval 1-265 (MTRYIFITGG…GNRVCEKLNI (265 aa)) is amidoligase domain. Residue S13 participates in CTP binding. S13 serves as a coordination point for UTP. Residues 14 to 19 (SLGKGI) and D71 each bind ATP. Mg(2+) is bound by residues D71 and E139. CTP contacts are provided by residues 146 to 148 (DIE), 186 to 191 (KTKPTQ), and K222. Residues 186–191 (KTKPTQ) and K222 each bind UTP. The Glutamine amidotransferase type-1 domain occupies 290–541 (TVAVVGKYVD…IKAGLAAKEA (252 aa)). G351 is a binding site for L-glutamine. The Nucleophile; for glutamine hydrolysis role is filled by C378. L-glutamine-binding positions include 379-382 (LGMQ), E402, and R469. Catalysis depends on residues H514 and E516.

Belongs to the CTP synthase family. In terms of assembly, homotetramer.

It catalyses the reaction UTP + L-glutamine + ATP + H2O = CTP + L-glutamate + ADP + phosphate + 2 H(+). The enzyme catalyses L-glutamine + H2O = L-glutamate + NH4(+). It carries out the reaction UTP + NH4(+) + ATP = CTP + ADP + phosphate + 2 H(+). It participates in pyrimidine metabolism; CTP biosynthesis via de novo pathway; CTP from UDP: step 2/2. With respect to regulation, allosterically activated by GTP, when glutamine is the substrate; GTP has no effect on the reaction when ammonia is the substrate. The allosteric effector GTP functions by stabilizing the protein conformation that binds the tetrahedral intermediate(s) formed during glutamine hydrolysis. Inhibited by the product CTP, via allosteric rather than competitive inhibition. In terms of biological role, catalyzes the ATP-dependent amination of UTP to CTP with either L-glutamine or ammonia as the source of nitrogen. Regulates intracellular CTP levels through interactions with the four ribonucleotide triphosphates. This Coxiella burnetii (strain RSA 331 / Henzerling II) protein is CTP synthase.